Consider the following 66-residue polypeptide: Cold shock-like protein (66 aa).

In terms of domain architecture, CSD spans 3-62 (GKVKWFDSKKGYGFITKDEGGDVFVHWSAIEMEGFKTLKEGQVVEFEIQEGKKGPQAAHV).

In terms of assembly, monomer.

It is found in the cytoplasm. This Thermotoga maritima (strain ATCC 43589 / DSM 3109 / JCM 10099 / NBRC 100826 / MSB8) protein is Cold shock-like protein (csp).